Here is a 668-residue protein sequence, read N- to C-terminus: tRNA 5-methylaminomethyl-2-thiouridine biosynthesis bifunctional protein MnmC (668 aa).

A tRNA (mnm(5)s(2)U34)-methyltransferase region spans residues 1–245 (MKHYAIQPAN…KREMLCGVME (245 aa)). Positions 270–668 (IGGGIASALL…LLKGKAVKAG (399 aa)) are FAD-dependent cmnm(5)s(2)U34 oxidoreductase.

It in the N-terminal section; belongs to the methyltransferase superfamily. tRNA (mnm(5)s(2)U34)-methyltransferase family. In the C-terminal section; belongs to the DAO family. It depends on FAD as a cofactor.

The protein localises to the cytoplasm. The enzyme catalyses 5-aminomethyl-2-thiouridine(34) in tRNA + S-adenosyl-L-methionine = 5-methylaminomethyl-2-thiouridine(34) in tRNA + S-adenosyl-L-homocysteine + H(+). Its function is as follows. Catalyzes the last two steps in the biosynthesis of 5-methylaminomethyl-2-thiouridine (mnm(5)s(2)U) at the wobble position (U34) in tRNA. Catalyzes the FAD-dependent demodification of cmnm(5)s(2)U34 to nm(5)s(2)U34, followed by the transfer of a methyl group from S-adenosyl-L-methionine to nm(5)s(2)U34, to form mnm(5)s(2)U34. This chain is tRNA 5-methylaminomethyl-2-thiouridine biosynthesis bifunctional protein MnmC, found in Escherichia coli (strain SMS-3-5 / SECEC).